A 308-amino-acid polypeptide reads, in one-letter code: uncharacterized protein (308 aa).

Polar residues predominate over residues 43-55 (SQYGTWADQHQNG). The disordered stretch occupies residues 43 to 289 (SQYGTWADQH…KEERSEECSP (247 aa)). Ser-62 bears the Phosphoserine mark. The segment covering 80-90 (HLSSYTESTSV) has biased composition (polar residues). Positions 91–109 (EQRDSSRDRRSSSVDRSSS) are enriched in basic and acidic residues. Positions 136 to 152 (IHQTSVLDSSALKTRVQ) are enriched in polar residues. Residues 153–168 (LSKRSRRRAPISHSLR) are compositionally biased toward basic residues. Ser-166 is modified (phosphoserine). Composition is skewed to basic and acidic residues over residues 175–186 (SESRSPLEEESH) and 193–216 (DSTEEKSPRRDESDEEPPRVERTP). A phosphoserine mark is found at Ser-205, Ser-259, Ser-262, and Ser-288.

This is an uncharacterized protein from Mus musculus (Mouse).